Reading from the N-terminus, the 385-residue chain is UDP-N-acetylglucosamine--N-acetylmuramyl-(pentapeptide) pyrophosphoryl-undecaprenol N-acetylglucosamine transferase (385 aa).

UDP-N-acetyl-alpha-D-glucosamine contacts are provided by residues 11–13, Asn-117, Arg-160, Ser-215, and Gln-317; that span reads TGG.

This sequence belongs to the glycosyltransferase 28 family. MurG subfamily.

Its subcellular location is the cell inner membrane. It carries out the reaction di-trans,octa-cis-undecaprenyl diphospho-N-acetyl-alpha-D-muramoyl-L-alanyl-D-glutamyl-meso-2,6-diaminopimeloyl-D-alanyl-D-alanine + UDP-N-acetyl-alpha-D-glucosamine = di-trans,octa-cis-undecaprenyl diphospho-[N-acetyl-alpha-D-glucosaminyl-(1-&gt;4)]-N-acetyl-alpha-D-muramoyl-L-alanyl-D-glutamyl-meso-2,6-diaminopimeloyl-D-alanyl-D-alanine + UDP + H(+). Its pathway is cell wall biogenesis; peptidoglycan biosynthesis. Its function is as follows. Cell wall formation. Catalyzes the transfer of a GlcNAc subunit on undecaprenyl-pyrophosphoryl-MurNAc-pentapeptide (lipid intermediate I) to form undecaprenyl-pyrophosphoryl-MurNAc-(pentapeptide)GlcNAc (lipid intermediate II). In Rickettsia typhi (strain ATCC VR-144 / Wilmington), this protein is UDP-N-acetylglucosamine--N-acetylmuramyl-(pentapeptide) pyrophosphoryl-undecaprenol N-acetylglucosamine transferase.